A 325-amino-acid chain; its full sequence is Phospho-N-acetylmuramoyl-pentapeptide-transferase (325 aa).

10 consecutive transmembrane segments (helical) span residues 3 to 23, 48 to 68, 79 to 99, 106 to 126, 136 to 156, 174 to 194, 199 to 219, 223 to 243, 246 to 266, and 298 to 318; these read LMIYSVLVAFVVSLIQGPILI, GTPTMGGVIFIISSVITVFVV, AIFAFVAFGIIGLIDDSLKII, LKAYQKMILLLIVSSIIGFYA, IIVPFVHKTWNLGMFYIPFII, GLATSITLLVMTFFAVVSYAT, LAVFCSIVAGALLGFLKYNAY, VFMGDTGSLALGGVVGAVAMM, LPLIVIIVGGIYLAEALSVIL, and IVSIFSIITVILCLIGFLSLI.

It belongs to the glycosyltransferase 4 family. MraY subfamily. It depends on Mg(2+) as a cofactor.

Its subcellular location is the cell membrane. The enzyme catalyses UDP-N-acetyl-alpha-D-muramoyl-L-alanyl-gamma-D-glutamyl-meso-2,6-diaminopimeloyl-D-alanyl-D-alanine + di-trans,octa-cis-undecaprenyl phosphate = di-trans,octa-cis-undecaprenyl diphospho-N-acetyl-alpha-D-muramoyl-L-alanyl-D-glutamyl-meso-2,6-diaminopimeloyl-D-alanyl-D-alanine + UMP. Its pathway is cell wall biogenesis; peptidoglycan biosynthesis. Catalyzes the initial step of the lipid cycle reactions in the biosynthesis of the cell wall peptidoglycan: transfers peptidoglycan precursor phospho-MurNAc-pentapeptide from UDP-MurNAc-pentapeptide onto the lipid carrier undecaprenyl phosphate, yielding undecaprenyl-pyrophosphoryl-MurNAc-pentapeptide, known as lipid I. The polypeptide is Phospho-N-acetylmuramoyl-pentapeptide-transferase (Clostridium novyi (strain NT)).